A 1120-amino-acid chain; its full sequence is TBC1 domain family member 8B (1120 aa).

2 consecutive GRAM domains span residues 145–212 and 285–353; these read LKFE…EKTS and EQFN…DKTN. The 188-residue stretch at 487–674 folds into the Rab-GAP TBC domain; it reads GIPETLRGEL…NVVDCFFYDG (188 aa). The region spanning 858–893 is the EF-hand domain; sequence NKDSLALWTFRLLDENSDCLINFKEFSSAIDIMYNG. A disordered region spans residues 1035 to 1066; that stretch reads SPTSSAKGFSGTVCGSGGPSEEKTGSHLEKDP. A compositionally biased stretch (basic and acidic residues) spans 1054–1066; the sequence is SEEKTGSHLEKDP.

In terms of assembly, interacts (via domain Rab-GAP TBC) with RAB11B (in GTP-bound form). In terms of tissue distribution, kidney (at protein level).

The protein localises to the cytoplasm. It is found in the cytosol. Functionally, involved in vesicular recycling, probably as a RAB11B GTPase-activating protein. The polypeptide is TBC1 domain family member 8B (TBC1D8B) (Homo sapiens (Human)).